The chain runs to 606 residues: R-linalool synthase, chloroplastic (606 aa).

The N-terminal 51 residues, 1–51 (MCTIISVNHHHVAILSKPKVKLFHTKNKRSASINLPWSLSPSSSAASRPIS), are a transit peptide targeting the chloroplast. Residues Arg326, Asp363, Asp367, Arg504, and Asp507 each contribute to the (2E)-geranyl diphosphate site. Mg(2+)-binding residues include Asp363 and Asp367. The DDXXD motif signature appears at 363–367 (DDVYD). Mg(2+)-binding residues include Asp507, Thr511, and Glu515.

The protein belongs to the terpene synthase family. Tpsb subfamily. Requires Mg(2+) as cofactor. The cofactor is Mn(2+).

It localises to the plastid. The protein localises to the chloroplast. It carries out the reaction (2E)-geranyl diphosphate + H2O = (R)-linalool + diphosphate. It functions in the pathway secondary metabolite biosynthesis; terpenoid biosynthesis. Monoterpene synthase that catalyzes the formation of (3R)-linalool from geranyl diphosphate, but not from farnesyl diphosphate or geranylgeranyl diphosphate. This chain is R-linalool synthase, chloroplastic, found in Mentha aquatica (Water mint).